Here is a 117-residue protein sequence, read N- to C-terminus: Glycine cleavage system H-like protein (117 aa).

Positions 21–103 constitute a Lipoyl-binding domain; it reads IVRLGLSSRM…ESEGWFVVLQ (83 aa). Lysine 62 bears the N6-lipoyllysine mark.

This sequence belongs to the GcvH family. The cofactor is (R)-lipoate.

The polypeptide is Glycine cleavage system H-like protein (Chlamydia muridarum (strain MoPn / Nigg)).